Here is a 412-residue protein sequence, read N- to C-terminus: Pyruvate dehydrogenase E1 component subunit alpha, mitochondrial (412 aa).

Residues His104, Tyr130, Arg131, Ala169, Gly177, Val179, Asp208, Gly209, Ala210, Asn237, and Tyr239 each coordinate pyruvate. Positions 130 and 131 each coordinate thiamine diphosphate. Residues Gly177, Val179, Asp208, Gly209, Ala210, and Asn237 each coordinate thiamine diphosphate. Residue Asp208 participates in Mg(2+) binding. Residues Asn237 and Tyr239 each coordinate Mg(2+). Thiamine diphosphate is bound at residue His304.

As to quaternary structure, tetramer of 2 alpha and 2 beta subunits. Requires thiamine diphosphate as cofactor. The cofactor is Mg(2+).

The protein localises to the mitochondrion matrix. The catalysed reaction is N(6)-[(R)-lipoyl]-L-lysyl-[protein] + pyruvate + H(+) = N(6)-[(R)-S(8)-acetyldihydrolipoyl]-L-lysyl-[protein] + CO2. E1 activity is regulated by phosphorylation (inactivation) and dephosphorylation (activation) of the alpha subunit. Functionally, the pyruvate dehydrogenase complex catalyzes the overall conversion of pyruvate to acetyl-CoA and CO(2). It contains multiple copies of three enzymatic components: pyruvate dehydrogenase (E1), dihydrolipoamide acetyltransferase (E2) and lipoamide dehydrogenase (E3). This is Pyruvate dehydrogenase E1 component subunit alpha, mitochondrial (PDA1) from Kluyveromyces lactis (strain ATCC 8585 / CBS 2359 / DSM 70799 / NBRC 1267 / NRRL Y-1140 / WM37) (Yeast).